A 1487-amino-acid chain; its full sequence is Golgin subfamily A member 3 (1487 aa).

Methionine 1 bears the N-acetylmethionine mark. The segment at 1-118 (MDGASAKQDG…GTSAEGSVRK (118 aa)) is disordered. Serine 18 and serine 60 each carry phosphoserine. Positions 62-74 (DRSSQVAICQNGQ) are enriched in polar residues. The segment at 121–141 (LQSLRLSLPMQETQLCSTASS) is interaction with GOPC. Positions 172 to 257 (ERSSQPATKM…DYRTEDPSDS (86 aa)) are golgi-targeting domain. Disordered regions lie at residues 221 to 321 (PKVG…SSLS) and 365 to 394 (AAQHQDQNQEANGEVRSRRDSICSSVSMES). Low complexity-rich tracts occupy residues 269–288 (SSLKQSRSSTSVVSEVSPSS), 312–321 (SDSSSHSSLS), and 365–375 (AAQHQDQNQEA). Position 270 is a phosphoserine (serine 270). The stretch at 358–1454 (KDVLQAAAAQ…TITVHESLSS (1097 aa)) forms a coiled coil. Serine 381, serine 385, and serine 461 each carry phosphoserine. Over residues 785–796 (KEELDRGARRLE) the composition is skewed to basic and acidic residues. Residues 785 to 804 (KEELDRGARRLEEDTEETSG) are disordered. Residue serine 979 is modified to Phosphoserine. Basic and acidic residues predominate over residues 1372–1382 (RGAAKKKEPKG). 2 disordered regions span residues 1372–1396 (RGAAKKKEPKGESNSSSPATPIKIP) and 1458–1487 (VEAAPAEHAHPRGDTKLHNQNSVPRDGLGQ). At serine 1387 the chain carries Phosphoserine. The segment covering 1462–1474 (PAEHAHPRGDTKL) has biased composition (basic and acidic residues). Serine 1479 carries the post-translational modification Phosphoserine.

Homodimer. Interacts with GOLGA7. Interacts with GOPC. Post-translationally, cleaved by caspases in apoptotic cells. In terms of tissue distribution, highly expressed in testis. Transcripts can be found in spermatids during spermatogenesis. No expression in Leydig cells, spermatogonia or spermatocytes. Detected at low levels in all tissues.

The protein localises to the cytoplasm. Its subcellular location is the golgi apparatus. The protein resides in the golgi stack membrane. Plays an important role in spermatogenesis and/or testis development. Probably identical with the serologically detectable male antigen (SDM). Probably involved in maintaining Golgi structure. The polypeptide is Golgin subfamily A member 3 (Golga3) (Mus musculus (Mouse)).